Here is a 53-residue protein sequence, read N- to C-terminus: ATP synthase protein 8 (53 aa).

A helical membrane pass occupies residues 9-29; the sequence is WIFFLFFFICIFLIFNIMNYF.

It belongs to the ATPase protein 8 family. In terms of assembly, F-type ATPases have 2 components, CF(1) - the catalytic core - and CF(0) - the membrane proton channel.

The protein localises to the mitochondrion membrane. Its function is as follows. Mitochondrial membrane ATP synthase (F(1)F(0) ATP synthase or Complex V) produces ATP from ADP in the presence of a proton gradient across the membrane which is generated by electron transport complexes of the respiratory chain. F-type ATPases consist of two structural domains, F(1) - containing the extramembraneous catalytic core and F(0) - containing the membrane proton channel, linked together by a central stalk and a peripheral stalk. During catalysis, ATP synthesis in the catalytic domain of F(1) is coupled via a rotary mechanism of the central stalk subunits to proton translocation. Part of the complex F(0) domain. Minor subunit located with subunit a in the membrane. The protein is ATP synthase protein 8 (mt:ATPase8) of Bombyx mori (Silk moth).